A 420-amino-acid polypeptide reads, in one-letter code: Serine hydroxymethyltransferase (420 aa).

Residues Leu121 and 125–127 each bind (6S)-5,6,7,8-tetrahydrofolate; that span reads GHL. N6-(pyridoxal phosphate)lysine is present on Lys230. (6S)-5,6,7,8-tetrahydrofolate is bound by residues Glu246 and 354–356; that span reads SPF.

The protein belongs to the SHMT family. In terms of assembly, homodimer. Pyridoxal 5'-phosphate is required as a cofactor.

Its subcellular location is the cytoplasm. The enzyme catalyses (6R)-5,10-methylene-5,6,7,8-tetrahydrofolate + glycine + H2O = (6S)-5,6,7,8-tetrahydrofolate + L-serine. It participates in one-carbon metabolism; tetrahydrofolate interconversion. It functions in the pathway amino-acid biosynthesis; glycine biosynthesis; glycine from L-serine: step 1/1. Functionally, catalyzes the reversible interconversion of serine and glycine with tetrahydrofolate (THF) serving as the one-carbon carrier. This reaction serves as the major source of one-carbon groups required for the biosynthesis of purines, thymidylate, methionine, and other important biomolecules. Also exhibits THF-independent aldolase activity toward beta-hydroxyamino acids, producing glycine and aldehydes, via a retro-aldol mechanism. This is Serine hydroxymethyltransferase from Rickettsia rickettsii (strain Iowa).